An 806-amino-acid polypeptide reads, in one-letter code: Phenylalanine--tRNA ligase beta subunit (806 aa).

Residues 40–155 form the tRNA-binding domain; the sequence is NKGVKGVVVG…SDAEVGADAL (116 aa). One can recognise a B5 domain in the interval 409-484; sequence VQERTVSVTA…RLYGYDHIPV (76 aa). Asp462, Asp468, Glu471, and Glu472 together coordinate Mg(2+). The 94-residue stretch at 712 to 805 folds into the FDX-ACB domain; sequence PRFPSMTRDM…VEEKFGAELR (94 aa).

It belongs to the phenylalanyl-tRNA synthetase beta subunit family. Type 1 subfamily. As to quaternary structure, tetramer of two alpha and two beta subunits. Mg(2+) serves as cofactor.

Its subcellular location is the cytoplasm. It carries out the reaction tRNA(Phe) + L-phenylalanine + ATP = L-phenylalanyl-tRNA(Phe) + AMP + diphosphate + H(+). The polypeptide is Phenylalanine--tRNA ligase beta subunit (Bacillus cereus (strain ZK / E33L)).